Reading from the N-terminus, the 387-residue chain is EARP and GARP complex-interacting protein 1 (387 aa).

Met1 is modified (N-acetylmethionine). WD repeat units follow at residues 4-48, 55-101, 124-164, 172-214, 219-258, and 263-302; these read DAPV…IIDF, INKN…VWRM, ELLC…LWDL, VLAS…GWDT, QIYC…FWDT, and EPVK…LSNM. Residues 310 to 335 form a disordered region; sequence FGHLVDDDDISDQEDHRSEEKSKEPL. Phosphoserine is present on Ser320. Basic and acidic residues predominate over residues 322–335; sequence QEDHRSEEKSKEPL. Residues 338 to 379 form a WD 7 repeat; the sequence is NVIATYEEHEDSVYAVDWSSADPWLFASLSYDGRLVINRVPR.

The protein belongs to the WD repeat EIPR1 family. In terms of assembly, interacts with two multisubunit tethering complexes: EARP composed of VPS50, VPS51, VPS52 and VPS53 subunits and GARP complex composed of VPS51, VPS52, VPS53 and VPS54 subunits. Interacts with SNAP29.

Its subcellular location is the golgi apparatus. The protein localises to the trans-Golgi network. Acts as a component of endosomal retrieval machinery that is involved in protein transport from early endosomes to either recycling endosomes or the trans-Golgi network. Mediates the recruitment of Golgi-associated retrograde protein (GARP) complex to the trans-Golgi network and controls early endosome-to-Golgi transport of internalized protein. Promotes the recycling of internalized transferrin receptor (TFRC) to the plasma membrane through interaction with endosome-associated recycling protein (EARP) complex. Controls proper insulin distribution and secretion, and retention of cargo in mature dense core vesicles. Required for the stability of the endosome-associated retrograde protein (EARP) complex subunits and for proper localization and association of EARP with membranes. This chain is EARP and GARP complex-interacting protein 1, found in Homo sapiens (Human).